A 409-amino-acid chain; its full sequence is Probable type I inositol 1,4,5-trisphosphate 5-phosphatase (409 aa).

The protein belongs to the inositol 1,4,5-trisphosphate 5-phosphatase type I family.

It carries out the reaction 1D-myo-inositol 1,4,5-trisphosphate + H2O = 1D-myo-inositol 1,4-bisphosphate + phosphate. The enzyme catalyses 1D-myo-inositol 1,3,4,5-tetrakisphosphate + H2O = 1D-myo-inositol 1,3,4-trisphosphate + phosphate. The protein is Probable type I inositol 1,4,5-trisphosphate 5-phosphatase (ipp-5) of Caenorhabditis elegans.